A 229-amino-acid chain; its full sequence is Aminopyrimidine aminohydrolase (229 aa).

Residue D44 participates in substrate binding. The active-site Nucleophile is C137. Substrate-binding residues include Y141 and Y167. Residue E208 is the Proton donor of the active site.

It belongs to the TenA family. Homotetramer.

It catalyses the reaction 4-amino-5-aminomethyl-2-methylpyrimidine + H2O = 4-amino-5-hydroxymethyl-2-methylpyrimidine + NH4(+). It carries out the reaction thiamine + H2O = 5-(2-hydroxyethyl)-4-methylthiazole + 4-amino-5-hydroxymethyl-2-methylpyrimidine + H(+). Its pathway is cofactor biosynthesis; thiamine diphosphate biosynthesis. In terms of biological role, catalyzes an amino-pyrimidine hydrolysis reaction at the C5' of the pyrimidine moiety of thiamine compounds, a reaction that is part of a thiamine salvage pathway. Thus, catalyzes the conversion of 4-amino-5-aminomethyl-2-methylpyrimidine to 4-amino-5-hydroxymethyl-2-methylpyrimidine (HMP). Is also able to catalyze the hydrolytic cleavage of thiamine; however, this thiaminase activity may not be physiologically relevant. Therefore, is probably involved in the regeneration of the thiamine pyrimidine from thiamine degraded products present in the environment, rather than in thiamine degradation. The polypeptide is Aminopyrimidine aminohydrolase (Staphylococcus aureus (strain MRSA252)).